The sequence spans 910 residues: Leucine--tRNA ligase (910 aa).

The 'HIGH' region motif lies at 42 to 52; that stretch reads PYPSGKLHMGH. The short motif at 668–672 is the 'KMSKS' region element; the sequence is KMSKS. Lys671 lines the ATP pocket.

The protein belongs to the class-I aminoacyl-tRNA synthetase family.

It localises to the cytoplasm. The catalysed reaction is tRNA(Leu) + L-leucine + ATP = L-leucyl-tRNA(Leu) + AMP + diphosphate. The sequence is that of Leucine--tRNA ligase from Neisseria meningitidis serogroup A / serotype 4A (strain DSM 15465 / Z2491).